Reading from the N-terminus, the 104-residue chain is UPF0145 protein VNG_2432C (104 aa).

This sequence belongs to the UPF0145 family.

This chain is UPF0145 protein VNG_2432C, found in Halobacterium salinarum (strain ATCC 700922 / JCM 11081 / NRC-1) (Halobacterium halobium).